The primary structure comprises 197 residues: Peptide deformylase (197 aa).

The Fe cation site is built by C106 and H148. E149 is an active-site residue. H152 is a Fe cation binding site.

This sequence belongs to the polypeptide deformylase family. The cofactor is Fe(2+).

It carries out the reaction N-terminal N-formyl-L-methionyl-[peptide] + H2O = N-terminal L-methionyl-[peptide] + formate. Functionally, removes the formyl group from the N-terminal Met of newly synthesized proteins. Requires at least a dipeptide for an efficient rate of reaction. N-terminal L-methionine is a prerequisite for activity but the enzyme has broad specificity at other positions. This Mycolicibacterium gilvum (strain PYR-GCK) (Mycobacterium gilvum (strain PYR-GCK)) protein is Peptide deformylase.